The sequence spans 302 residues: Acetylxylan esterase (302 aa).

An N-terminal signal peptide occupies residues 1 to 20; it reads MPSVKETLTLLLSQAFLATG. A propeptide spanning residues 21-31 is cleaved from the precursor; that stretch reads SPVDGETVVKR. Q32 carries the post-translational modification Pyrrolidone carboxylic acid. An N-linked (GlcNAc...) asparagine glycan is attached at N94. The active site involves S121. Residues 236 to 273 are disordered; it reads QLSSGGSQPPGGGPTSTSRPTSTRTGSSPGPTQTHWGQ. A linker region spans residues 244–266; that stretch reads PPGGGPTSTSRPTSTRTGSSPGP. Residues 250 to 269 are compositionally biased toward low complexity; the sequence is TSTSRPTSTRTGSSPGPTQT. A CBM1 domain is found at 266 to 302; the sequence is PTQTHWGQCGGQGWTGPTQCESGTTCQVISQWYSQCL. Disulfide bonds link C274-C291 and C285-C301.

It belongs to the cutinase family. Acetylxylan esterase subfamily. Monomer. Post-translationally, glycosylated.

It is found in the secreted. It carries out the reaction Deacetylation of xylans and xylo-oligosaccharides.. It participates in glycan degradation; xylan degradation. Its activity is regulated as follows. Inhibited by phenylmethylsulfonyl flouride. Its function is as follows. Degrades acetylated xylans by cleaving acetyl side groups from the hetero-xylan backbone. The polypeptide is Acetylxylan esterase (axe1) (Hypocrea jecorina (Trichoderma reesei)).